Consider the following 425-residue polypeptide: Serine--tRNA ligase (425 aa).

L-serine is bound at residue 233–235 (TAE). 264-266 (RAE) contacts ATP. Residue E287 participates in L-serine binding. 351-354 (EISS) lines the ATP pocket. Position 387 (S387) interacts with L-serine.

It belongs to the class-II aminoacyl-tRNA synthetase family. Type-1 seryl-tRNA synthetase subfamily. Homodimer. The tRNA molecule binds across the dimer.

Its subcellular location is the cytoplasm. It carries out the reaction tRNA(Ser) + L-serine + ATP = L-seryl-tRNA(Ser) + AMP + diphosphate + H(+). The enzyme catalyses tRNA(Sec) + L-serine + ATP = L-seryl-tRNA(Sec) + AMP + diphosphate + H(+). The protein operates within aminoacyl-tRNA biosynthesis; selenocysteinyl-tRNA(Sec) biosynthesis; L-seryl-tRNA(Sec) from L-serine and tRNA(Sec): step 1/1. Catalyzes the attachment of serine to tRNA(Ser). Is also able to aminoacylate tRNA(Sec) with serine, to form the misacylated tRNA L-seryl-tRNA(Sec), which will be further converted into selenocysteinyl-tRNA(Sec). The protein is Serine--tRNA ligase of Clostridium perfringens (strain SM101 / Type A).